We begin with the raw amino-acid sequence, 100 residues long: UPF0213 protein YhbQ (100 aa).

The 76-residue stretch at 2 to 77 (TPWFLYLIRT…KQLTKRQKER (76 aa)) folds into the GIY-YIG domain.

This sequence belongs to the UPF0213 family.

The sequence is that of UPF0213 protein YhbQ from Escherichia coli O127:H6 (strain E2348/69 / EPEC).